We begin with the raw amino-acid sequence, 315 residues long: Glycerol-3-phosphate dehydrogenase [NAD(P)+] (315 aa).

NADPH is bound by residues W24, R44, R45, and K92. Sn-glycerol 3-phosphate-binding residues include K92 and G120. NADPH is bound at residue S124. Positions 175, 228, 238, 239, and 240 each coordinate sn-glycerol 3-phosphate. K175 serves as the catalytic Proton acceptor. Residue R239 participates in NADPH binding. Position 265 (E265) interacts with NADPH.

The protein belongs to the NAD-dependent glycerol-3-phosphate dehydrogenase family.

The protein localises to the cytoplasm. It carries out the reaction sn-glycerol 3-phosphate + NAD(+) = dihydroxyacetone phosphate + NADH + H(+). The enzyme catalyses sn-glycerol 3-phosphate + NADP(+) = dihydroxyacetone phosphate + NADPH + H(+). It participates in membrane lipid metabolism; glycerophospholipid metabolism. In terms of biological role, catalyzes the reduction of the glycolytic intermediate dihydroxyacetone phosphate (DHAP) to sn-glycerol 3-phosphate (G3P), the key precursor for phospholipid synthesis. The sequence is that of Glycerol-3-phosphate dehydrogenase [NAD(P)+] from Synechococcus sp. (strain JA-2-3B'a(2-13)) (Cyanobacteria bacterium Yellowstone B-Prime).